The sequence spans 584 residues: Glutathione hydrolase proenzyme (584 aa).

An N-terminal signal peptide occupies residues 1-25 (MAPAAMNLLCTVLYLLSSFAQVSDA). A glycan (N-linked (GlcNAc...) asparagine) is linked at Asn-111. Arg-120 contributes to the L-glutamate binding site. Asn-135, Asn-262, Asn-272, Asn-350, and Asn-370 each carry an N-linked (GlcNAc...) asparagine glycan. Residue Thr-395 is the Nucleophile of the active site. L-glutamate-binding positions include Thr-413, Glu-434, and 465–466 (SS). A glycan (N-linked (GlcNAc...) asparagine) is linked at Asn-547.

Belongs to the gamma-glutamyltransferase family. Heterodimer composed of the light and heavy chains. The active site is located in the light chain. Post-translationally, cleaved by autocatalysis into a large and a small subunit and the autocatalytic cleavage is essential to the functional activation of the enzyme.

The protein resides in the secreted. It carries out the reaction an N-terminal (5-L-glutamyl)-[peptide] + an alpha-amino acid = 5-L-glutamyl amino acid + an N-terminal L-alpha-aminoacyl-[peptide]. The enzyme catalyses glutathione + H2O = L-cysteinylglycine + L-glutamate. The catalysed reaction is an S-substituted glutathione + H2O = an S-substituted L-cysteinylglycine + L-glutamate. It catalyses the reaction leukotriene C4 + H2O = leukotriene D4 + L-glutamate. The protein operates within sulfur metabolism; glutathione metabolism. Cleaves the gamma-glutamyl bond of extracellular glutathione (gamma-Glu-Cys-Gly), glutathione conjugates, and other gamma-glutamyl compounds. The metabolism of glutathione releases free glutamate and the dipeptide cysteinyl-glycine, which is hydrolyzed to cysteine and glycine by dipeptidases. In the presence of high concentrations of dipeptides and some amino acids, can also catalyze a transpeptidation reaction, transferring the gamma-glutamyl moiety to an acceptor amino acid to form a new gamma-glutamyl compound. Initiates extracellular glutathione (GSH) breakdown, provides cells with a local cysteine supply and contributes to maintain intracellular GSH level. It is part of the cell antioxidant defense mechanism. In Arthroderma benhamiae (strain ATCC MYA-4681 / CBS 112371) (Trichophyton mentagrophytes), this protein is Glutathione hydrolase proenzyme.